We begin with the raw amino-acid sequence, 352 residues long: Divinyl chlorophyll a/b light-harvesting protein PcbA (352 aa).

6 helical membrane-spanning segments follow: residues 27-47, 90-110, 142-162, 203-223, 243-263, and 306-326; these read FIAA…AFTL, VLAI…GGLL, FILG…VEWA, VMGG…WHIA, AVLS…AFWS, and LANV…WHAL.

It belongs to the PsbB/PsbC family. IsiA/Pcb subfamily. In terms of assembly, the antenna complex consists of divinyl chlorophylls (a and b) and divinyl chlorophyll a/b binding proteins and binds less divinyl chlorophyll b than does low-light-adapted Prochlorococcus. Also forms complexes with PSII, consisting of a PSII dimer and 4 or 8 PcbA subunits. These complexes are also found under conditions of iron-starvation. Divinyl chlorophyll a serves as cofactor. Requires divinyl chlorophyll b as cofactor.

It is found in the cellular thylakoid membrane. Its function is as follows. The antenna complex functions as a light receptor, it captures and delivers excitation energy to photosystem II and possibly to photosystem I. The Prochlorales pcb genes are not related to higher plant LHCs. The protein is Divinyl chlorophyll a/b light-harvesting protein PcbA (pcbA) of Prochlorococcus marinus subsp. pastoris (strain CCMP1986 / NIES-2087 / MED4).